The sequence spans 494 residues: DDB1- and CUL4-associated factor 4 (494 aa).

The tract at residues 1 to 65 (MHQSSWKSRR…AGSSSVPDLP (65 aa)) is disordered. Positions 7–20 (KSRRHRRRGHRHSA) are enriched in basic residues. A compositionally biased stretch (low complexity) spans 51-60 (STSSTAGSSS). WD repeat units lie at residues 367–406 (FHDS…CIRQ) and 409–450 (GHVN…LLRT).

Interacts with DDB1 and CUL4A.

Its pathway is protein modification; protein ubiquitination. May function as a substrate receptor for CUL4-DDB1 E3 ubiquitin-protein ligase complex. This chain is DDB1- and CUL4-associated factor 4 (DCAF4), found in Bos taurus (Bovine).